A 1392-amino-acid polypeptide reads, in one-letter code: DNA-directed RNA polymerase subunit beta'' (1392 aa).

Residues Cys-224, Cys-295, Cys-302, and Cys-305 each coordinate Zn(2+).

Belongs to the RNA polymerase beta' chain family. RpoC2 subfamily. In plastids the minimal PEP RNA polymerase catalytic core is composed of four subunits: alpha, beta, beta', and beta''. When a (nuclear-encoded) sigma factor is associated with the core the holoenzyme is formed, which can initiate transcription. The cofactor is Zn(2+).

It localises to the plastid. It is found in the chloroplast. It carries out the reaction RNA(n) + a ribonucleoside 5'-triphosphate = RNA(n+1) + diphosphate. Its function is as follows. DNA-dependent RNA polymerase catalyzes the transcription of DNA into RNA using the four ribonucleoside triphosphates as substrates. In Eucalyptus globulus subsp. globulus (Tasmanian blue gum), this protein is DNA-directed RNA polymerase subunit beta''.